A 260-amino-acid polypeptide reads, in one-letter code: Pyridoxine 5'-phosphate synthase (260 aa).

Residues Asn10 and Arg21 each coordinate 3-amino-2-oxopropyl phosphate. The active-site Proton acceptor is His46. The 1-deoxy-D-xylulose 5-phosphate site is built by Arg48 and His53. Glu76 serves as the catalytic Proton acceptor. Thr113 contacts 1-deoxy-D-xylulose 5-phosphate. His204 serves as the catalytic Proton donor. 3-amino-2-oxopropyl phosphate contacts are provided by residues Asp205 and 227–228 (GH).

Belongs to the PNP synthase family. In terms of assembly, homooctamer; tetramer of dimers.

The protein localises to the cytoplasm. The catalysed reaction is 3-amino-2-oxopropyl phosphate + 1-deoxy-D-xylulose 5-phosphate = pyridoxine 5'-phosphate + phosphate + 2 H2O + H(+). The protein operates within cofactor biosynthesis; pyridoxine 5'-phosphate biosynthesis; pyridoxine 5'-phosphate from D-erythrose 4-phosphate: step 5/5. Catalyzes the complicated ring closure reaction between the two acyclic compounds 1-deoxy-D-xylulose-5-phosphate (DXP) and 3-amino-2-oxopropyl phosphate (1-amino-acetone-3-phosphate or AAP) to form pyridoxine 5'-phosphate (PNP) and inorganic phosphate. The polypeptide is Pyridoxine 5'-phosphate synthase (Xylella fastidiosa (strain M23)).